We begin with the raw amino-acid sequence, 692 residues long: Ribosome-releasing factor 2, mitochondrial (692 aa).

The transit peptide at methionine 1–tyrosine 29 directs the protein to the mitochondrion. One can recognise a tr-type G domain in the interval serine 31–glutamate 310. Residues alanine 40–threonine 47, aspartate 104–histidine 108, and asparagine 158–aspartate 161 each bind GTP.

The protein belongs to the TRAFAC class translation factor GTPase superfamily. Classic translation factor GTPase family. EF-G/EF-2 subfamily.

Its subcellular location is the mitochondrion. In terms of biological role, mitochondrial GTPase that mediates the disassembly of ribosomes from messenger RNA at the termination of mitochondrial protein biosynthesis. Not involved in the GTP-dependent ribosomal translocation step during translation elongation. This chain is Ribosome-releasing factor 2, mitochondrial, found in Drosophila sechellia (Fruit fly).